The chain runs to 151 residues: MYPAHLLVLLAVCVSLLGAASIPARPLNLYQFGNMIQCANHGRRPTRHYMDYGCYCGKGGSGTPVDELDRCCQTHDDCYGEAEKLPACNYMMSGPYYNTYSYECNDGELTCKDNNDECKAFICNCDRTAAICFARTPYNDANWNIDTKTRC.

The first 27 residues, 1–27 (MYPAHLLVLLAVCVSLLGAASIPARPL), serve as a signal peptide directing secretion. 7 disulfides stabilise this stretch: cysteine 38–cysteine 104, cysteine 54–cysteine 151, cysteine 56–cysteine 72, cysteine 71–cysteine 132, cysteine 78–cysteine 125, cysteine 88–cysteine 118, and cysteine 111–cysteine 123. The Ca(2+) site is built by tyrosine 55, glycine 57, and glycine 59. Residue histidine 75 is part of the active site. Aspartate 76 serves as a coordination point for Ca(2+). Aspartate 126 is a catalytic residue.

The protein belongs to the phospholipase A2 family. Group I subfamily. D49 sub-subfamily. Ca(2+) serves as cofactor. In terms of tissue distribution, expressed by the venom gland.

It is found in the secreted. The enzyme catalyses a 1,2-diacyl-sn-glycero-3-phosphocholine + H2O = a 1-acyl-sn-glycero-3-phosphocholine + a fatty acid + H(+). PLA2 catalyzes the calcium-dependent hydrolysis of the 2-acyl groups in 3-sn-phosphoglycerides. This Tropidechis carinatus (Australian rough-scaled snake) protein is Acidic phospholipase A2 1.